The following is a 459-amino-acid chain: Mitochondrial distribution and morphology protein 10 (459 aa).

Belongs to the MDM10 family. Component of the ER-mitochondria encounter structure (ERMES) or MDM complex, composed of MMM1, MDM10, MDM12 and MDM34. Associates with the mitochondrial outer membrane sorting assembly machinery SAM(core) complex.

Its subcellular location is the mitochondrion outer membrane. Its function is as follows. Component of the ERMES/MDM complex, which serves as a molecular tether to connect the endoplasmic reticulum and mitochondria. Components of this complex are involved in the control of mitochondrial shape and protein biogenesis and may function in phospholipid exchange. MDM10 is involved in the late assembly steps of the general translocase of the mitochondrial outer membrane (TOM complex). Functions in the TOM40-specific route of the assembly of outer membrane beta-barrel proteins, including the association of TOM40 with the receptor TOM22 and small TOM proteins. Can associate with the SAM(core) complex as well as the MDM12-MMM1 complex, both involved in late steps of the major beta-barrel assembly pathway, that is responsible for biogenesis of all outer membrane beta-barrel proteins. May act as a switch that shuttles between both complexes and channels precursor proteins into the TOM40-specific pathway. Plays a role in mitochondrial morphology and in the inheritance of mitochondria. The polypeptide is Mitochondrial distribution and morphology protein 10 (Clavispora lusitaniae (strain ATCC 42720) (Yeast)).